A 282-amino-acid chain; its full sequence is Small-conductance mechanosensitive channel (282 aa).

The Periplasmic segment spans residues 1–23 (MWADIYHKLVEIYDIKAVKFLLD). Residues 24-46 (VLKILIIAFIGIKFADFLIYRFY) traverse the membrane as a helical segment. At 47-66 (KLYSKSKIQLPQRKIDTLTS) the chain is on the cytoplasmic side. The helical transmembrane segment at 67–87 (LTKNAVRYIIYFLAGASILKL) threads the bilayer. Residues 88–89 (FN) lie on the Periplasmic side of the membrane. Residues 90 to 110 (IDMTSLLAVAGIGSLAIGFGA) traverse the membrane as a helical segment. Residues 111 to 282 (QNLVKDMISG…TVILSEKKTN (172 aa)) lie on the Cytoplasmic side of the membrane.

It belongs to the MscS (TC 1.A.23) family. As to quaternary structure, homoheptamer.

It is found in the cell inner membrane. In terms of biological role, mechanosensitive ion channel that participates in the regulation of osmotic pressure changes within the cell, opening in response to stretch forces in the membrane lipid bilayer, without the need for other proteins. Has high selectivity for anions, and may contribute to resistance to hypoosmotic shock. The chain is Small-conductance mechanosensitive channel from Caldanaerobacter subterraneus subsp. tengcongensis (strain DSM 15242 / JCM 11007 / NBRC 100824 / MB4) (Thermoanaerobacter tengcongensis).